Consider the following 376-residue polypeptide: METLANRLDACQDKMLELYEKDSDKLEDQITHWHLLRVENALLYKARECGLTHIGHQVVPPLSVTKAKARNAIEVHVALQQLQESAYAHEPWTLRDTSREMWDTAPKGCWKKRGITVEVRYDGDESKAMCYVQWRELYVQNYSDDRWVKVPGKVSYEGLYYTHENMNIYYVNFKDDACVYGETGKWEVHVGGKVIHHDAFDPVSSTREISTPGPVCTSNTTPASTQAQVGASEGPEQKRQRLEAVDGQHQQQRQGSKDSTQKAAERAGGQVDSDRTRLCDTRSAHPVRHPSDPDCAPVIHLRGDPNSLKCFRYRLHHGKRKLYSRSSSTWRWSCESENQAAFVTLWYTSDTQRTEFLNVVKVPPGIQVILGYMSIF.

The interval 1–206 is transactivation domain; the sequence is METLANRLDA…HDAFDPVSST (206 aa). Residues 204–277 form a disordered region; it reads SSTREISTPG…GGQVDSDRTR (74 aa). Polar residues predominate over residues 216–229; sequence CTSNTTPASTQAQV. 2 stretches are compositionally biased toward basic and acidic residues: residues 235 to 246 and 255 to 265; these read PEQKRQRLEAVD and GSKDSTQKAAE. A DNA-binding domain region spans residues 295 to 376; sequence CAPVIHLRGD…QVILGYMSIF (82 aa).

Belongs to the papillomaviridae E2 protein family. Binds DNA as homodimer. Interacts with protein E1; this interaction greatly increases E1 DNA-binding activity. Interacts with protein L1; this interaction enhances E2-dependent replication and transcription activation. Interacts with protein L2; this interaction inhibits E2 transcriptional activity but not DNA replication function E2. Interacts with protein E7; this interaction inhibits E7 oncogenic activity. Interacts with host TAF1; this interaction modulates E2-dependent transcriptional regulation. Interacts with host BRD4; this interaction mediates E2 transcriptional activation function. Additionally, the interaction with host BRD4 on mitotic chromosomes mediates tethering of the viral genome. Interacts with host TOPBP1; this interaction is required for optimal viral DNA replication. Post-translationally, phosphorylated.

The protein resides in the host nucleus. Functionally, plays a role in the initiation of viral DNA replication. A dimer of E2 interacts with a dimer of E1 in order to improve specificity of E1 DNA binding activity. Once the complex recognizes and binds DNA at specific sites, the E2 dimer is removed from DNA. E2 also regulates viral transcription through binding to the E2RE response element (5'-ACCNNNNNNGGT-3') present in multiple copies in the regulatory regions of the viral genome. Activates or represses transcription depending on E2RE's position with regards to proximal promoter elements including the TATA-box. Repression occurs by sterically hindering the assembly of the transcription initiation complex. In Human papillomavirus type 10, this protein is Regulatory protein E2.